Consider the following 459-residue polypeptide: Phosphoglucosamine mutase (459 aa).

The active-site Phosphoserine intermediate is the Ser100. Mg(2+) contacts are provided by Ser100, Asp256, Asp258, and Asp260. Ser100 carries the phosphoserine modification.

The protein belongs to the phosphohexose mutase family. It depends on Mg(2+) as a cofactor. Activated by phosphorylation.

It carries out the reaction alpha-D-glucosamine 1-phosphate = D-glucosamine 6-phosphate. Its function is as follows. Catalyzes the conversion of glucosamine-6-phosphate to glucosamine-1-phosphate. The protein is Phosphoglucosamine mutase of Heliobacterium modesticaldum (strain ATCC 51547 / Ice1).